The primary structure comprises 114 residues: Nucleoid-associated protein Cyan7425_0899 (114 aa).

This sequence belongs to the YbaB/EbfC family. As to quaternary structure, homodimer.

Its subcellular location is the cytoplasm. It localises to the nucleoid. Functionally, binds to DNA and alters its conformation. May be involved in regulation of gene expression, nucleoid organization and DNA protection. This Cyanothece sp. (strain PCC 7425 / ATCC 29141) protein is Nucleoid-associated protein Cyan7425_0899.